Here is a 295-residue protein sequence, read N- to C-terminus: Trehalose/maltose transport system permease protein MalF (295 aa).

The next 7 helical transmembrane spans lie at 16-36, 79-99, 112-132, 146-166, 210-230, 236-256, and 267-287; these read LGYL…ILPV, VSFS…FALI, AIVL…WELM, ILGV…FAIV, ITLP…TIDA, IIYV…SLLA, and IGSA…IVYL. The region spanning 75–286 is the ABC transmembrane type-1 domain; it reads TFVTVSFSFV…VLVLSFTIVY (212 aa).

Belongs to the binding-protein-dependent transport system permease family. The complex is composed of two ATP-binding proteins (MalK), two transmembrane proteins (MalG and MalF) and a solute-binding protein (MalE).

It localises to the cell membrane. In terms of biological role, part of the ABC transporter complex MalEFGK involved in trehalose/maltose import. Responsible for the translocation of the substrate across the membrane. The protein is Trehalose/maltose transport system permease protein MalF (malF) of Thermococcus litoralis (strain ATCC 51850 / DSM 5473 / JCM 8560 / NS-C).